We begin with the raw amino-acid sequence, 437 residues long: Glutamyl-tRNA reductase (437 aa).

Substrate is bound by residues 49-52 (TCNR), S109, 114-116 (ETQ), and Q120. C50 (nucleophile) is an active-site residue. 189–194 (GAGKMS) serves as a coordination point for NADP(+).

It belongs to the glutamyl-tRNA reductase family. As to quaternary structure, homodimer.

It carries out the reaction (S)-4-amino-5-oxopentanoate + tRNA(Glu) + NADP(+) = L-glutamyl-tRNA(Glu) + NADPH + H(+). It functions in the pathway porphyrin-containing compound metabolism; protoporphyrin-IX biosynthesis; 5-aminolevulinate from L-glutamyl-tRNA(Glu): step 1/2. Functionally, catalyzes the NADPH-dependent reduction of glutamyl-tRNA(Glu) to glutamate 1-semialdehyde (GSA). The sequence is that of Glutamyl-tRNA reductase from Paenibacillus macerans (Bacillus macerans).